The chain runs to 330 residues: 4-hydroxythreonine-4-phosphate dehydrogenase (330 aa).

Substrate is bound at residue Thr-133. A divalent metal cation contacts are provided by His-161, His-206, and His-261. Substrate is bound by residues Lys-269, Asn-278, and Arg-287.

This sequence belongs to the PdxA family. As to quaternary structure, homodimer. It depends on Zn(2+) as a cofactor. Mg(2+) serves as cofactor. Co(2+) is required as a cofactor.

The protein localises to the cytoplasm. The catalysed reaction is 4-(phosphooxy)-L-threonine + NAD(+) = 3-amino-2-oxopropyl phosphate + CO2 + NADH. It participates in cofactor biosynthesis; pyridoxine 5'-phosphate biosynthesis; pyridoxine 5'-phosphate from D-erythrose 4-phosphate: step 4/5. Its function is as follows. Catalyzes the NAD(P)-dependent oxidation of 4-(phosphooxy)-L-threonine (HTP) into 2-amino-3-oxo-4-(phosphooxy)butyric acid which spontaneously decarboxylates to form 3-amino-2-oxopropyl phosphate (AHAP). The chain is 4-hydroxythreonine-4-phosphate dehydrogenase from Xylella fastidiosa (strain 9a5c).